A 257-amino-acid chain; its full sequence is Thiazole synthase (257 aa).

Lys-100 (schiff-base intermediate with DXP) is an active-site residue. 1-deoxy-D-xylulose 5-phosphate-binding positions include Gly-161, 187 to 188, and 209 to 210; these read AG and NT.

This sequence belongs to the ThiG family. Homotetramer. Forms heterodimers with either ThiH or ThiS.

It localises to the cytoplasm. It catalyses the reaction [ThiS sulfur-carrier protein]-C-terminal-Gly-aminoethanethioate + 2-iminoacetate + 1-deoxy-D-xylulose 5-phosphate = [ThiS sulfur-carrier protein]-C-terminal Gly-Gly + 2-[(2R,5Z)-2-carboxy-4-methylthiazol-5(2H)-ylidene]ethyl phosphate + 2 H2O + H(+). Its pathway is cofactor biosynthesis; thiamine diphosphate biosynthesis. Catalyzes the rearrangement of 1-deoxy-D-xylulose 5-phosphate (DXP) to produce the thiazole phosphate moiety of thiamine. Sulfur is provided by the thiocarboxylate moiety of the carrier protein ThiS. In vitro, sulfur can be provided by H(2)S. In Pelagibacter ubique (strain HTCC1062), this protein is Thiazole synthase.